A 286-amino-acid polypeptide reads, in one-letter code: Nucleotide-binding protein Sfum_2066 (286 aa).

Position 8–15 (8–15 (GLSGSGKS)) interacts with ATP. Residue 59–62 (DIRE) coordinates GTP.

It belongs to the RapZ-like family.

In terms of biological role, displays ATPase and GTPase activities. The sequence is that of Nucleotide-binding protein Sfum_2066 from Syntrophobacter fumaroxidans (strain DSM 10017 / MPOB).